The primary structure comprises 426 residues: UDP-N-acetylglucosamine 1-carboxyvinyltransferase 2 (426 aa).

22–23 contributes to the phosphoenolpyruvate binding site; sequence KN. Arginine 92 lines the UDP-N-acetyl-alpha-D-glucosamine pocket. Aspartate 116 serves as the catalytic Proton donor. Residues 121-125, aspartate 307, and isoleucine 329 each bind UDP-N-acetyl-alpha-D-glucosamine; that span reads RPIDQ.

This sequence belongs to the EPSP synthase family. MurA subfamily.

The protein resides in the cytoplasm. It carries out the reaction phosphoenolpyruvate + UDP-N-acetyl-alpha-D-glucosamine = UDP-N-acetyl-3-O-(1-carboxyvinyl)-alpha-D-glucosamine + phosphate. It functions in the pathway cell wall biogenesis; peptidoglycan biosynthesis. In terms of biological role, cell wall formation. Adds enolpyruvyl to UDP-N-acetylglucosamine. The sequence is that of UDP-N-acetylglucosamine 1-carboxyvinyltransferase 2 from Lactiplantibacillus plantarum (strain ATCC BAA-793 / NCIMB 8826 / WCFS1) (Lactobacillus plantarum).